Reading from the N-terminus, the 308-residue chain is Acetylglutamate kinase (308 aa).

Residues 73–74, R95, and N194 contribute to the substrate site; that span reads GG.

The protein belongs to the acetylglutamate kinase family. ArgB subfamily.

The protein resides in the cytoplasm. The enzyme catalyses N-acetyl-L-glutamate + ATP = N-acetyl-L-glutamyl 5-phosphate + ADP. The protein operates within amino-acid biosynthesis; L-arginine biosynthesis; N(2)-acetyl-L-ornithine from L-glutamate: step 2/4. Catalyzes the ATP-dependent phosphorylation of N-acetyl-L-glutamate. The sequence is that of Acetylglutamate kinase from Rhodococcus jostii (strain RHA1).